The primary structure comprises 389 residues: Mannitol-1-phosphate 5-dehydrogenase (389 aa).

7-18 (AVHFGGGNIGRG) serves as a coordination point for NAD(+). Residue K216 is part of the active site.

This sequence belongs to the mannitol dehydrogenase family. Monomer.

The catalysed reaction is D-mannitol 1-phosphate + NAD(+) = beta-D-fructose 6-phosphate + NADH + H(+). Functionally, catalyzes the NAD(H)-dependent interconversion of D-fructose 6-phosphate and D-mannitol 1-phosphate in the mannitol metabolic pathway. This chain is Mannitol-1-phosphate 5-dehydrogenase, found in Pyrenophora tritici-repentis (strain Pt-1C-BFP) (Wheat tan spot fungus).